A 471-amino-acid chain; its full sequence is Glutamate--tRNA ligase (471 aa).

Positions 9-19 match the 'HIGH' region motif; that stretch reads PSPTGYLHVGG. 4 residues coordinate Zn(2+): Cys-98, Cys-100, Cys-125, and His-127. A 'KMSKS' region motif is present at residues 237–241; that stretch reads KLSKR. Lys-240 is an ATP binding site.

It belongs to the class-I aminoacyl-tRNA synthetase family. Glutamate--tRNA ligase type 1 subfamily. In terms of assembly, monomer. Zn(2+) is required as a cofactor.

It localises to the cytoplasm. It catalyses the reaction tRNA(Glu) + L-glutamate + ATP = L-glutamyl-tRNA(Glu) + AMP + diphosphate. Functionally, catalyzes the attachment of glutamate to tRNA(Glu) in a two-step reaction: glutamate is first activated by ATP to form Glu-AMP and then transferred to the acceptor end of tRNA(Glu). The sequence is that of Glutamate--tRNA ligase from Salmonella gallinarum (strain 287/91 / NCTC 13346).